Reading from the N-terminus, the 159-residue chain is uncharacterized protein (159 aa).

It localises to the mitochondrion. This is an uncharacterized protein from Arabidopsis thaliana (Mouse-ear cress).